The chain runs to 123 residues: Large ribosomal subunit protein eL8 (123 aa).

It belongs to the eukaryotic ribosomal protein eL8 family. Part of the 50S ribosomal subunit. Probably part of the RNase P complex.

Its subcellular location is the cytoplasm. Functionally, multifunctional RNA-binding protein that recognizes the K-turn motif in ribosomal RNA, the RNA component of RNase P, box H/ACA, box C/D and box C'/D' sRNAs. The chain is Large ribosomal subunit protein eL8 from Methanobrevibacter smithii (strain ATCC 35061 / DSM 861 / OCM 144 / PS).